Consider the following 109-residue polypeptide: Probable sulredoxin (109 aa).

A Rieske domain is found at 3–107 (WKRTISAKAL…IRDNGGWIEV (105 aa)). C43, H45, C62, and H65 together coordinate [2Fe-2S] cluster.

Belongs to the SDX family. Requires [2Fe-2S] cluster as cofactor.

Its subcellular location is the cytoplasm. The protein is Probable sulredoxin (sdx) of Saccharolobus solfataricus (strain ATCC 35092 / DSM 1617 / JCM 11322 / P2) (Sulfolobus solfataricus).